A 370-amino-acid polypeptide reads, in one-letter code: Aminomethyltransferase (370 aa).

The protein belongs to the GcvT family. The glycine cleavage system is composed of four proteins: P, T, L and H.

The catalysed reaction is N(6)-[(R)-S(8)-aminomethyldihydrolipoyl]-L-lysyl-[protein] + (6S)-5,6,7,8-tetrahydrofolate = N(6)-[(R)-dihydrolipoyl]-L-lysyl-[protein] + (6R)-5,10-methylene-5,6,7,8-tetrahydrofolate + NH4(+). The glycine cleavage system catalyzes the degradation of glycine. The polypeptide is Aminomethyltransferase (Clostridium botulinum (strain ATCC 19397 / Type A)).